A 392-amino-acid polypeptide reads, in one-letter code: Na(+)/H(+) antiporter NhaA (392 aa).

The next 11 helical transmembrane spans lie at 17–37 (ILLI…LSAL), 59–79 (LILW…GLEV), 95–115 (IFPA…YLFF), 125–145 (GWAI…ALLG), 154–174 (VFLL…IALF), 179–199 (VALV…ILNW), 213–233 (FILW…GVIV), 254–274 (VLHP…NAGV), 290–310 (VGIA…FSWV), 328–348 (IFAV…IAGL), and 363–383 (LGIL…LNSV).

Belongs to the NhaA Na(+)/H(+) (TC 2.A.33) antiporter family.

It is found in the cell inner membrane. It carries out the reaction Na(+)(in) + 2 H(+)(out) = Na(+)(out) + 2 H(+)(in). Functionally, na(+)/H(+) antiporter that extrudes sodium in exchange for external protons. This Proteus mirabilis (strain HI4320) protein is Na(+)/H(+) antiporter NhaA.